The chain runs to 37 residues: Large ribosomal subunit protein bL36 (37 aa).

This sequence belongs to the bacterial ribosomal protein bL36 family.

The sequence is that of Large ribosomal subunit protein bL36 from Streptomyces avermitilis (strain ATCC 31267 / DSM 46492 / JCM 5070 / NBRC 14893 / NCIMB 12804 / NRRL 8165 / MA-4680).